Consider the following 243-residue polypeptide: 4-hydroxy-tetrahydrodipicolinate reductase (243 aa).

NAD(+)-binding positions include 9 to 14 (GANGKM), 78 to 80 (GTS), and 104 to 107 (APNF). Catalysis depends on His134, which acts as the Proton donor/acceptor. His135 contributes to the (S)-2,3,4,5-tetrahydrodipicolinate binding site. Catalysis depends on Lys138, which acts as the Proton donor. 144-145 (GT) provides a ligand contact to (S)-2,3,4,5-tetrahydrodipicolinate.

It belongs to the DapB family.

Its subcellular location is the cytoplasm. It carries out the reaction (S)-2,3,4,5-tetrahydrodipicolinate + NAD(+) + H2O = (2S,4S)-4-hydroxy-2,3,4,5-tetrahydrodipicolinate + NADH + H(+). It catalyses the reaction (S)-2,3,4,5-tetrahydrodipicolinate + NADP(+) + H2O = (2S,4S)-4-hydroxy-2,3,4,5-tetrahydrodipicolinate + NADPH + H(+). The protein operates within amino-acid biosynthesis; L-lysine biosynthesis via DAP pathway; (S)-tetrahydrodipicolinate from L-aspartate: step 4/4. Functionally, catalyzes the conversion of 4-hydroxy-tetrahydrodipicolinate (HTPA) to tetrahydrodipicolinate. This chain is 4-hydroxy-tetrahydrodipicolinate reductase, found in Legionella pneumophila (strain Paris).